The chain runs to 249 residues: Ribosomal RNA small subunit methyltransferase G (249 aa).

Residues G88, F93, 111–113, 139–140, and R158 each bind S-adenosyl-L-methionine; these read DAT and AE. Residues C164 and C249 are joined by a disulfide bond. Residues 245–246 form an RNA binding region; sequence RH.

The protein belongs to the methyltransferase superfamily. RNA methyltransferase RsmG family.

It is found in the cytoplasm. The enzyme catalyses guanosine(527) in 16S rRNA + S-adenosyl-L-methionine = N(7)-methylguanosine(527) in 16S rRNA + S-adenosyl-L-homocysteine. Specifically methylates the N7 position of guanine in position 527 of 16S rRNA. Shows a marked preference for deproteinized 16S rRNA as substrate and is completely inactive with native 30S subunits as substrate. The sequence is that of Ribosomal RNA small subunit methyltransferase G from Thermus thermophilus (strain ATCC 27634 / DSM 579 / HB8).